Consider the following 112-residue polypeptide: Replication initiation control protein YabA (112 aa).

Zn(2+) contacts are provided by histidine 85, cysteine 87, cysteine 101, and cysteine 104.

This sequence belongs to the YabA family. As to quaternary structure, homotetramer. Interacts with both DnaA and DnaN, acting as a bridge between these two proteins. The cofactor is Zn(2+).

The protein localises to the cytoplasm. It is found in the nucleoid. Its function is as follows. Involved in control of chromosome replication initiation. Inhibits the cooperative binding of DnaA to the oriC region, thus negatively regulating initiation of chromosome replication. Inhibits the ability of DnaA-ATP to form a helix on DNA; does not disassemble preformed DnaA-DNA helices. Decreases the residence time of DnaA on the chromosome at its binding sites (oriC, replication forks and promoter-binding sites). Tethers DnaA to the replication machinery via the DNA polymerase beta sliding clamp subunit (dnaN). Associates with oriC and other DnaA targets on the chromosome in a DnaA-dependent manner. In Lacticaseibacillus casei (strain BL23) (Lactobacillus casei), this protein is Replication initiation control protein YabA.